We begin with the raw amino-acid sequence, 151 residues long: Late embryogenesis abundant protein Lea14-A (151 aa).

The protein belongs to the LEA type 2 family.

This Gossypium hirsutum (Upland cotton) protein is Late embryogenesis abundant protein Lea14-A (LEA14-A).